Here is an 81-residue protein sequence, read N- to C-terminus: Mu/omega-theraphotoxin-Hs1a (81 aa).

The first 21 residues, 1–21 (MRASMFLALAGLVLLFVVCYA), serve as a signal peptide directing secretion. Positions 22-48 (SESEEKEFPRELLFKFFAVDDFKGEER) are excised as a propeptide. Intrachain disulfides connect Cys50–Cys65, Cys57–Cys70, and Cys64–Cys77.

This sequence belongs to the neurotoxin 10 (Hwtx-1) family. 23 (HwTx-I) subfamily. Expressed by the venom gland.

It localises to the secreted. Its function is as follows. Lethal toxin with multiple biological activities. Inhibits voltage-gated TTX-sensitive sodium channels in DRG neurons (IC(50)=55 nM) and also shows activity when directly tested on Nav1.7/SCN9A (IC(50)=25.1-630 nM). Inhibits N-type calcium channels (Cav2.2/CACNA1B (IC(50)=100 nM)). Also blocks neuromuscular transmission. In vivo, intrathecal injected toxin shows analgesic activity in the rat formalin-induced pain model, without induction of motor dysfunction in rats. The sequence is that of Mu/omega-theraphotoxin-Hs1a from Cyriopagopus schmidti (Chinese bird spider).